We begin with the raw amino-acid sequence, 634 residues long: Ankyrin repeat protein OPG025 (634 aa).

6 ANK repeats span residues 36–69 (DGETPLKAYVTKKNNNIKNDVVILLLSSVDYKNI), 70–100 (NDFDIFEYLCSDNIDIDLLKLLISKGIEINS), 103–134 (NGINIVEKYATTSNPNVDVFKLLLDKGIPTCS), 175–211 (MGKTVLYYYIITRSQDGYATSLDVINYLISHKKEMRY), 307–337 (IQDLLLEYVSYHTVYINVIKCMIDEGATLYR), and 412–441 (HGCSILYHCIKSHSVSLVEWLIDNGADINI).

Belongs to the orthopoxvirus OPG025 family. Interacts with components of host SCF complex CUL1 and SKP1 and components of the cullin deneddylation/COP9 signalosome complex subunits COPS7A and COPS7B.

Its function is as follows. Plays a role in the inhibition of host immune repsonse by counteracting the action of interferons on early events in the viral replication cycle. In Vaccinia virus (strain Copenhagen) (VACV), this protein is Ankyrin repeat protein OPG025 (OPG025).